The sequence spans 255 residues: ATP synthase subunit a (255 aa).

Positions 1–7 (MMFNNII) are cleaved as a propeptide — removed in mature form. The next 6 helical transmembrane spans lie at 35-55 (FGFY…LITY), 91-111 (YFPF…LGLI), 120-140 (HFIL…ILGF), 147-167 (FFSL…LVLI), 177-197 (VSLG…LVIL), and 208-228 (GIFY…FSGL).

It belongs to the ATPase A chain family. In terms of assembly, F-type ATPases have 2 components, CF(1) - the catalytic core - and CF(0) - the membrane proton channel. CF(1) has five subunits: alpha(3), beta(3), gamma(1), delta(1), epsilon(1). CF(0) has three main subunits: a, b and c.

It is found in the mitochondrion inner membrane. Mitochondrial membrane ATP synthase (F(1)F(0) ATP synthase or Complex V) produces ATP from ADP in the presence of a proton gradient across the membrane which is generated by electron transport complexes of the respiratory chain. F-type ATPases consist of two structural domains, F(1) - containing the extramembraneous catalytic core and F(0) - containing the membrane proton channel, linked together by a central stalk and a peripheral stalk. During catalysis, ATP synthesis in the catalytic domain of F(1) is coupled via a rotary mechanism of the central stalk subunits to proton translocation. Key component of the proton channel; it may play a direct role in the translocation of protons across the membrane. This chain is ATP synthase subunit a (ATP6), found in Trichophyton rubrum (Athlete's foot fungus).